A 58-amino-acid polypeptide reads, in one-letter code: Small ribosomal subunit protein bS21 (58 aa).

Belongs to the bacterial ribosomal protein bS21 family.

The chain is Small ribosomal subunit protein bS21 from Staphylococcus saprophyticus subsp. saprophyticus (strain ATCC 15305 / DSM 20229 / NCIMB 8711 / NCTC 7292 / S-41).